The following is a 478-amino-acid chain: Cytochrome P450 monooxygenase ATR3 (478 aa).

The helical transmembrane segment at 20–42 (AVAFVTASALYYVLPAAISHIQL) threads the bilayer. N-linked (GlcNAc...) asparagine glycans are attached at residues asparagine 159 and asparagine 268.

Belongs to the cytochrome P450 family. It depends on heme as a cofactor.

The protein resides in the membrane. The protein operates within mycotoxin biosynthesis. Its function is as follows. Cytochrome P450 monooxygenase; part of the core atranone cluster (CAC) which products are predicted to catalyze most or all steps of mycotoxin atranone synthesis, starting from geranylgeranyl pyrophosphate (GGPP). The initial cyclization of GGPP to dolabellane is probably performed by the terpene cyclase ATR13. The Baeyer-Villiger oxidation near the end of the atranone synthesis, which converts atranones D and E to atranones F and G is predicted to be catalyzed by the monooxygenase ATR8. Of the CAC's other predicted gene products, the reducing PKS ATR6 might synthesize a polyketide chain. This polyketide is probably transferred onto the atranone backbone by the polyketide transferase ATR5. Other predicted CAC products include 4 oxygenases (ATR2, ATR3, ATR4, and ATR14), 3 short-chain reductases (ATR7, ATR9, and ATR10), and a methyltransferase (ATR12). These may all be involved in the various steps of atranone biosynthesis, although their specific roles must await experimental determination. The polypeptide is Cytochrome P450 monooxygenase ATR3 (Stachybotrys chlorohalonatus (strain IBT 40285)).